A 238-amino-acid chain; its full sequence is Ion-translocating oxidoreductase complex subunit E (238 aa).

5 helical membrane-spanning segments follow: residues 41 to 61 (LGLG…VSLV), 71 to 91 (LPAF…LMQA), 95 to 115 (ELYQ…VILG), 130 to 150 (SFDG…LGGL), and 184 to 204 (GFLL…LIAL).

The protein belongs to the NqrDE/RnfAE family. In terms of assembly, the complex is composed of six subunits: RnfA, RnfB, RnfC, RnfD, RnfE and RnfG.

Its subcellular location is the cell inner membrane. Part of a membrane-bound complex that couples electron transfer with translocation of ions across the membrane. This Pseudomonas aeruginosa (strain UCBPP-PA14) protein is Ion-translocating oxidoreductase complex subunit E.